A 197-amino-acid chain; its full sequence is ADP-ribosylation factor-like protein 16 (197 aa).

GTP contacts are provided by residues 30–37 (GATGVGKT), 82–86 (ELGGC), and 139–142 (NKID).

It belongs to the small GTPase superfamily. Arf family. As to quaternary structure, interacts with RIGI; this interaction is GTP-dependent and induced upon viral infection; this interaction suppresses the RNA sensing activity of RIGI.

It is found in the cytoplasm. In terms of biological role, may suppress the RNA sensing activity of RIGI in a GTP-dependent. This Homo sapiens (Human) protein is ADP-ribosylation factor-like protein 16.